We begin with the raw amino-acid sequence, 432 residues long: Adenylosuccinate synthetase (432 aa).

GTP is bound by residues 13-19 and 41-43; these read GDEGKGK and GHT. Asp14 (proton acceptor) is an active-site residue. Asp14 and Gly41 together coordinate Mg(2+). Residues 14 to 17, 39 to 42, Thr130, Arg144, Gln225, Thr240, and Arg304 contribute to the IMP site; these read DEGK and NAGH. His42 serves as the catalytic Proton donor. Substrate is bound at residue 300–306; the sequence is AVTGRPR. Residues Arg306, 332-334, and 415-417 contribute to the GTP site; these read KLD and STG.

Belongs to the adenylosuccinate synthetase family. As to quaternary structure, homodimer. It depends on Mg(2+) as a cofactor.

The protein localises to the cytoplasm. The enzyme catalyses IMP + L-aspartate + GTP = N(6)-(1,2-dicarboxyethyl)-AMP + GDP + phosphate + 2 H(+). The protein operates within purine metabolism; AMP biosynthesis via de novo pathway; AMP from IMP: step 1/2. In terms of biological role, plays an important role in the de novo pathway of purine nucleotide biosynthesis. Catalyzes the first committed step in the biosynthesis of AMP from IMP. This is Adenylosuccinate synthetase from Actinobacillus pleuropneumoniae serotype 7 (strain AP76).